Reading from the N-terminus, the 434-residue chain is Nicotinate phosphoribosyltransferase (434 aa).

H242 is modified (phosphohistidine; by autocatalysis).

Belongs to the NAPRTase family. In terms of processing, transiently phosphorylated on a His residue during the reaction cycle. Phosphorylation strongly increases the affinity for substrates and increases the rate of nicotinate D-ribonucleotide production. Dephosphorylation regenerates the low-affinity form of the enzyme, leading to product release.

It catalyses the reaction nicotinate + 5-phospho-alpha-D-ribose 1-diphosphate + ATP + H2O = nicotinate beta-D-ribonucleotide + ADP + phosphate + diphosphate. It participates in cofactor biosynthesis; NAD(+) biosynthesis; nicotinate D-ribonucleotide from nicotinate: step 1/1. Its function is as follows. Catalyzes the synthesis of beta-nicotinate D-ribonucleotide from nicotinate and 5-phospho-D-ribose 1-phosphate at the expense of ATP. This Agrobacterium fabrum (strain C58 / ATCC 33970) (Agrobacterium tumefaciens (strain C58)) protein is Nicotinate phosphoribosyltransferase.